We begin with the raw amino-acid sequence, 268 residues long: Undecaprenyl-diphosphatase (268 aa).

The next 7 membrane-spanning stretches (helical) occupy residues phenylalanine 47 to leucine 67, phenylalanine 83 to lysine 103, leucine 109 to valine 129, phenylalanine 144 to valine 164, alanine 184 to phenylalanine 204, threonine 218 to leucine 238, and phenylalanine 246 to leucine 266.

It belongs to the UppP family.

The protein localises to the cell inner membrane. It catalyses the reaction di-trans,octa-cis-undecaprenyl diphosphate + H2O = di-trans,octa-cis-undecaprenyl phosphate + phosphate + H(+). Its function is as follows. Catalyzes the dephosphorylation of undecaprenyl diphosphate (UPP). Confers resistance to bacitracin. This Nitrobacter winogradskyi (strain ATCC 25391 / DSM 10237 / CIP 104748 / NCIMB 11846 / Nb-255) protein is Undecaprenyl-diphosphatase.